The sequence spans 578 residues: MTSKKLVNSVAGCADDALAGLVACNPSLQLLQGHRVALRSDLDSLKGRVALLSGGGSGHEPAHAGFIGKGMLTGVIAGAVFTSPAVGSILAAIRAVAQAGTVGTLLIVKNYTGDRLNFGLAREQARAEGIPVEMVVVGDDSAFTVLKKAGRRGLCGTVLIHKVAGALAEAGVGLEEITDRVSVVAKAMGTLGVSLSSCSVPGSKPTFELSADEVELGLGIHGEAGVRRIKMATANEIVALMLDHMTSSSNASHVPVPPGSSVVLMVNNLGGLSFLELGIIADAAVCSLEGHGVKIARALVGTFMSALEMPGVSLTLLLVDEPLLKLIDAETTASAWPNVAKVWVTGRKRSRAAPTEPLAAPDSTTAAGEASKQMVLVLEWVCTTLLGLEEHLNALDRAAGDGDCGTTHSRAARAIXGWLKEGPPPASPAQLLSKLSFLLLEKMGGSSGALYGLFLTAAAQPLKAKTDLPAWSAAMDAGLEAMQKYGKAAPGDRTMLDSLWAAGQELQAWKSPGANMLQILTKAVKSAEAAAEATKNMEAGAGRASYISSARLDQPDPGAVAAAAILRAILEVLQSQGA.

Residues 9–336 (SVAGCADDAL…IDAETTASAW (328 aa)) form the DhaK domain. Residues 56–59 (GSGH), lysine 109, and aspartate 114 contribute to the dihydroxyacetone site. Catalysis depends on histidine 221, which acts as the Tele-hemiaminal-histidine intermediate. Serine 350 carries the post-translational modification Phosphoserine. Residues 372–571 (KQMVLVLEWV…AAAILRAILE (200 aa)) enclose the DhaL domain. ATP-binding positions include 401–404 (DGDC), 446–447 (SS), glycine 486, and 494–495 (TM). 2 positions are modified to phosphoserine: serine 511 and serine 545. 556-558 (DPG) serves as a coordination point for ATP.

Homodimer. Interacts with IFIH1 (via the CARD domains), the interaction is inhibited by viral infection. Mg(2+) is required as a cofactor. It depends on Mn(2+) as a cofactor. Requires Co(2+) as cofactor.

It catalyses the reaction dihydroxyacetone + ATP = dihydroxyacetone phosphate + ADP + H(+). The catalysed reaction is D-glyceraldehyde + ATP = D-glyceraldehyde 3-phosphate + ADP + H(+). The enzyme catalyses FAD = riboflavin cyclic-4',5'-phosphate + AMP + H(+). Its activity is regulated as follows. Each activity is inhibited by the substrate(s) of the other. In terms of biological role, catalyzes both the phosphorylation of dihydroxyacetone and of glyceraldehyde, and the splitting of ribonucleoside diphosphate-X compounds among which FAD is the best substrate. Represses IFIH1-mediated cellular antiviral response. This Bos taurus (Bovine) protein is Triokinase/FMN cyclase (TKFC).